The sequence spans 327 residues: GMP reductase (327 aa).

Cysteine 175 functions as the Thioimidate intermediate in the catalytic mechanism. NADP(+) is bound at residue 204–227 (IIADGGIRTHGDIAKSVRFGASMV).

This sequence belongs to the IMPDH/GMPR family. GuaC type 2 subfamily.

It catalyses the reaction IMP + NH4(+) + NADP(+) = GMP + NADPH + 2 H(+). Its function is as follows. Catalyzes the irreversible NADPH-dependent deamination of GMP to IMP. It functions in the conversion of nucleobase, nucleoside and nucleotide derivatives of G to A nucleotides, and in maintaining the intracellular balance of A and G nucleotides. The chain is GMP reductase from Lysinibacillus sphaericus (strain C3-41).